Reading from the N-terminus, the 346-residue chain is Holliday junction branch migration complex subunit RuvB (346 aa).

The segment at 1–182 is large ATPase domain (RuvB-L); the sequence is MSEPARLISP…FGIPVRLTFY (182 aa). ATP is bound by residues leucine 21, arginine 22, glycine 63, lysine 66, threonine 67, threonine 68, 129–131, arginine 172, tyrosine 182, and arginine 219; that span reads EDY. Threonine 67 serves as a coordination point for Mg(2+). The tract at residues 183–253 is small ATPAse domain (RuvB-S); the sequence is TVEELELIVR…IADEALTRLL (71 aa). The head domain (RuvB-H) stretch occupies residues 256–346; sequence NVGFDQLDKR…AQFRLFQEDD (91 aa). DNA contacts are provided by arginine 292, arginine 311, and arginine 316.

This sequence belongs to the RuvB family. In terms of assembly, homohexamer. Forms an RuvA(8)-RuvB(12)-Holliday junction (HJ) complex. HJ DNA is sandwiched between 2 RuvA tetramers; dsDNA enters through RuvA and exits via RuvB. An RuvB hexamer assembles on each DNA strand where it exits the tetramer. Each RuvB hexamer is contacted by two RuvA subunits (via domain III) on 2 adjacent RuvB subunits; this complex drives branch migration. In the full resolvosome a probable DNA-RuvA(4)-RuvB(12)-RuvC(2) complex forms which resolves the HJ.

It localises to the cytoplasm. The enzyme catalyses ATP + H2O = ADP + phosphate + H(+). Its function is as follows. The RuvA-RuvB-RuvC complex processes Holliday junction (HJ) DNA during genetic recombination and DNA repair, while the RuvA-RuvB complex plays an important role in the rescue of blocked DNA replication forks via replication fork reversal (RFR). RuvA specifically binds to HJ cruciform DNA, conferring on it an open structure. The RuvB hexamer acts as an ATP-dependent pump, pulling dsDNA into and through the RuvAB complex. RuvB forms 2 homohexamers on either side of HJ DNA bound by 1 or 2 RuvA tetramers; 4 subunits per hexamer contact DNA at a time. Coordinated motions by a converter formed by DNA-disengaged RuvB subunits stimulates ATP hydrolysis and nucleotide exchange. Immobilization of the converter enables RuvB to convert the ATP-contained energy into a lever motion, pulling 2 nucleotides of DNA out of the RuvA tetramer per ATP hydrolyzed, thus driving DNA branch migration. The RuvB motors rotate together with the DNA substrate, which together with the progressing nucleotide cycle form the mechanistic basis for DNA recombination by continuous HJ branch migration. Branch migration allows RuvC to scan DNA until it finds its consensus sequence, where it cleaves and resolves cruciform DNA. This is Holliday junction branch migration complex subunit RuvB from Rhizobium etli (strain ATCC 51251 / DSM 11541 / JCM 21823 / NBRC 15573 / CFN 42).